We begin with the raw amino-acid sequence, 2925 residues long: Otogelin (2925 aa).

Residues Met-1–Ser-25 form the signal peptide. Positions Gly-39–Glu-69 are disordered. Positions Pro-56–Glu-69 are enriched in polar residues. Positions His-102–Gln-139 constitute an EGF-like domain. 5 cysteine pairs are disulfide-bonded: Cys-106–Cys-120, Cys-114–Cys-126, Cys-128–Cys-138, Cys-152–Cys-285, and Cys-199–Cys-206. The VWFD 1 domain maps to Ser-150–Pro-322. The tract at residues Glu-316 to Cys-335 is disordered. The segment covering Thr-326–Cys-335 has biased composition (polar residues). The VWFD 2 domain occupies Ala-512–Ser-688. 3 disulfide bridges follow: Cys-514–Cys-652, Cys-536–Cys-687, and Cys-558–Cys-566. Residues Cys-780 to Cys-844 form the TIL domain. Asn-914 is a glycosylation site (N-linked (GlcNAc...) asparagine). Residues Ser-984–Thr-1152 form the VWFD 3 domain. 2 cysteine pairs are disulfide-bonded: Cys-986-Cys-1115 and Cys-1030-Cys-1037. The disordered stretch occupies residues Leu-1476 to Thr-1540. An N-linked (GlcNAc...) asparagine glycan is attached at Asn-1478. Low complexity predominate over residues Pro-1502–Thr-1528. A glycan (N-linked (GlcNAc...) asparagine) is linked at Asn-1612. Disordered regions lie at residues Gly-1636–Val-1679, Val-1693–Ala-1715, and Lys-1737–Ser-1788. A compositionally biased stretch (polar residues) spans Ser-1650–Pro-1659. A compositionally biased stretch (low complexity) spans Pro-1694–Pro-1708. Pro residues predominate over residues Ser-1751–Pro-1764. In terms of domain architecture, VWFD 4 spans Cys-2110–Ser-2289. Disulfide bonds link Cys-2112/Cys-2249, Cys-2840/Cys-2889, Cys-2854/Cys-2903, Cys-2865/Cys-2920, and Cys-2869/Cys-2922. One can recognise a CTCK domain in the interval Cys-2840 to Ser-2925.

The protein belongs to the otogelin family. N-glycosylated. Not O-glycosylated.

It localises to the apical cell membrane. The protein localises to the secreted. The protein resides in the extracellular space. In terms of biological role, glycoprotein specific to acellular membranes of the inner ear. May be required for the anchoring of the otoconial membranes and cupulae to the underlying neuroepithelia in the vestibule. May be involved in the organization and/or stabilization of the fibrillar network that compose the tectorial membrane in the cochlea. May play a role in mechanotransduction processes. The protein is Otogelin (OTOG) of Homo sapiens (Human).